We begin with the raw amino-acid sequence, 294 residues long: Protoheme IX farnesyltransferase 1 (294 aa).

9 helical membrane-spanning segments follow: residues 8–28, 35–55, 82–102, 107–127, 132–152, 162–182, 208–228, 229–249, and 263–283; these read VTKPGIIMGNLISVAGGFLLA, PWLMVATLIGLSLVVASGCAI, AMAALCHGVVLGIIGFGLLIA, AAVFFAAFGYFIYVGVYSLYM, VYGTFIGSLSGAVPPVVGYCA, LILLVMFSLWQMPHSYAIAIF, IVLYIAIYALVVMLLPISGYT, GAAFMAVACITSFWWLLMALR, and QVFAFSIINITALSIAMAVDY.

This sequence belongs to the UbiA prenyltransferase family. Protoheme IX farnesyltransferase subfamily.

The protein localises to the cell inner membrane. It carries out the reaction heme b + (2E,6E)-farnesyl diphosphate + H2O = Fe(II)-heme o + diphosphate. It participates in porphyrin-containing compound metabolism; heme O biosynthesis; heme O from protoheme: step 1/1. Converts heme B (protoheme IX) to heme O by substitution of the vinyl group on carbon 2 of heme B porphyrin ring with a hydroxyethyl farnesyl side group. This is Protoheme IX farnesyltransferase 1 from Pseudoalteromonas translucida (strain TAC 125).